The chain runs to 193 residues: Thymidine kinase (193 aa).

ATP contacts are provided by residues Gly-16 to Ser-23 and Asp-89 to Gln-92. The active-site Proton acceptor is the Glu-90. Residues Cys-146, Cys-149, Cys-184, and Cys-187 each contribute to the Zn(2+) site.

The protein belongs to the thymidine kinase family. As to quaternary structure, homotetramer.

The protein localises to the cytoplasm. The enzyme catalyses thymidine + ATP = dTMP + ADP + H(+). This Caldanaerobacter subterraneus subsp. tengcongensis (strain DSM 15242 / JCM 11007 / NBRC 100824 / MB4) (Thermoanaerobacter tengcongensis) protein is Thymidine kinase.